The chain runs to 244 residues: Small ribosomal subunit protein uS2 (244 aa).

The protein belongs to the universal ribosomal protein uS2 family.

The sequence is that of Small ribosomal subunit protein uS2 from Endomicrobium trichonymphae.